Consider the following 276-residue polypeptide: Tryptophan synthase alpha chain (276 aa).

Catalysis depends on proton acceptor residues Glu49 and Asp60.

This sequence belongs to the TrpA family. In terms of assembly, tetramer of two alpha and two beta chains.

The catalysed reaction is (1S,2R)-1-C-(indol-3-yl)glycerol 3-phosphate + L-serine = D-glyceraldehyde 3-phosphate + L-tryptophan + H2O. It participates in amino-acid biosynthesis; L-tryptophan biosynthesis; L-tryptophan from chorismate: step 5/5. Its function is as follows. The alpha subunit is responsible for the aldol cleavage of indoleglycerol phosphate to indole and glyceraldehyde 3-phosphate. The chain is Tryptophan synthase alpha chain from Corynebacterium aurimucosum (strain ATCC 700975 / DSM 44827 / CIP 107346 / CN-1) (Corynebacterium nigricans).